Consider the following 693-residue polypeptide: Elongation factor G (693 aa).

Residues 9 to 283 (ERVRNIGIIA…AVCDYLPSPV (275 aa)) form the tr-type G domain. Residues 18–25 (AHIDAGKT), 82–86 (DTPGH), and 136–139 (NKMD) contribute to the GTP site.

The protein belongs to the TRAFAC class translation factor GTPase superfamily. Classic translation factor GTPase family. EF-G/EF-2 subfamily.

It localises to the cytoplasm. Its function is as follows. Catalyzes the GTP-dependent ribosomal translocation step during translation elongation. During this step, the ribosome changes from the pre-translocational (PRE) to the post-translocational (POST) state as the newly formed A-site-bound peptidyl-tRNA and P-site-bound deacylated tRNA move to the P and E sites, respectively. Catalyzes the coordinated movement of the two tRNA molecules, the mRNA and conformational changes in the ribosome. This chain is Elongation factor G, found in Dehalococcoides mccartyi (strain ATCC BAA-2266 / KCTC 15142 / 195) (Dehalococcoides ethenogenes (strain 195)).